Here is a 205-residue protein sequence, read N- to C-terminus: NADH-quinone oxidoreductase subunit I (205 aa).

4Fe-4S ferredoxin-type domains lie at 75-104 (RLLE…METS) and 114-143 (HEYT…HGGR). 8 residues coordinate [4Fe-4S] cluster: Cys84, Cys87, Cys90, Cys94, Cys123, Cys126, Cys129, and Cys133.

It belongs to the complex I 23 kDa subunit family. In terms of assembly, NDH-1 is composed of 14 different subunits. Subunits NuoA, H, J, K, L, M, N constitute the membrane sector of the complex. The cofactor is [4Fe-4S] cluster.

The protein localises to the cell inner membrane. The catalysed reaction is a quinone + NADH + 5 H(+)(in) = a quinol + NAD(+) + 4 H(+)(out). Its function is as follows. NDH-1 shuttles electrons from NADH, via FMN and iron-sulfur (Fe-S) centers, to quinones in the respiratory chain. The immediate electron acceptor for the enzyme in this species is believed to be ubiquinone. Couples the redox reaction to proton translocation (for every two electrons transferred, four hydrogen ions are translocated across the cytoplasmic membrane), and thus conserves the redox energy in a proton gradient. In Wolinella succinogenes (strain ATCC 29543 / DSM 1740 / CCUG 13145 / JCM 31913 / LMG 7466 / NCTC 11488 / FDC 602W) (Vibrio succinogenes), this protein is NADH-quinone oxidoreductase subunit I.